The primary structure comprises 457 residues: UDP-glycosyltransferase 708C1 (457 aa).

Gly31 provides a ligand contact to UDP-alpha-D-glucose. The Proton acceptor role is filled by His32. His32 contributes to the an anthocyanidin binding site. Thr34 contacts UDP-alpha-D-glucose. An an anthocyanidin-binding site is contributed by Asn94. The Charge relay role is filled by Asp129. Residue Thr150 participates in UDP-alpha-D-glucose binding. Residues 279–280 (NR) form a UDP region. 7 residues coordinate UDP-alpha-D-glucose: Val341, Gln343, His358, Trp361, Asn362, Ser363, and Glu366. An an anthocyanidin-binding site is contributed by Gly381. Residues Asp382 and Gln383 each contribute to the UDP-alpha-D-glucose site.

Belongs to the UDP-glycosyltransferase family. As to expression, expressed in cotyledons. Not detected in flowers, leaves, roots and hypocotyls.

It catalyses the reaction a 3'-hydro-2'-hydroxy-beta-oxodihydrochalcone + UDP-alpha-D-glucose = a 3'-(beta-D-glucopyranosyl)-2'-hydroxy-beta-oxodihydrochalcone + UDP + H(+). Functionally, UDP-glucose-dependent glucosyltransferase catalyzing the C-glucosylation of 2-hydroxyflavanones (2-hydroxynaringenin, 2-hydroxyeriodictyol and 2-hydroxypinocembrin) and phloretin. No activity with flavanones, flavones or flavonols. Exhibits C-glycosylation activity toward 2',4',6'-trihydroxyacetophenone and phloretin using UDP-glucose as sugar donor. Can use UDP-galactose as sugar donor, but catalytic efficiency is 14-fold lower toward UDP-galactose than toward UDP-glucose. The sequence is that of UDP-glycosyltransferase 708C1 from Fagopyrum esculentum (Common buckwheat).